Reading from the N-terminus, the 315-residue chain is Small ribosomal subunit biogenesis GTPase RsgA (315 aa).

A CP-type G domain is found at 80–241 (LSKQTHIIAS…IIDTPGIKGF (162 aa)). GTP contacts are provided by residues 129-132 (NKVD) and 183-191 (GHSGTGKST). The Zn(2+) site is built by cysteine 265, cysteine 270, histidine 272, and cysteine 278.

This sequence belongs to the TRAFAC class YlqF/YawG GTPase family. RsgA subfamily. Monomer. Associates with 30S ribosomal subunit, binds 16S rRNA. It depends on Zn(2+) as a cofactor.

It localises to the cytoplasm. Its function is as follows. One of several proteins that assist in the late maturation steps of the functional core of the 30S ribosomal subunit. Helps release RbfA from mature subunits. May play a role in the assembly of ribosomal proteins into the subunit. Circularly permuted GTPase that catalyzes slow GTP hydrolysis, GTPase activity is stimulated by the 30S ribosomal subunit. This Christiangramia forsetii (strain DSM 17595 / CGMCC 1.15422 / KT0803) (Gramella forsetii) protein is Small ribosomal subunit biogenesis GTPase RsgA.